A 163-amino-acid polypeptide reads, in one-letter code: Nucleotide-binding protein Mflv_5248 (163 aa).

This sequence belongs to the YajQ family.

Functionally, nucleotide-binding protein. This is Nucleotide-binding protein Mflv_5248 from Mycolicibacterium gilvum (strain PYR-GCK) (Mycobacterium gilvum (strain PYR-GCK)).